Consider the following 439-residue polypeptide: Adenylosuccinate synthetase (439 aa).

Residues G25–K31, G53–T55, and K62 contribute to the GTP site. D26 functions as the Proton acceptor in the catalytic mechanism. 2 residues coordinate Mg(2+): D26 and G53. IMP-binding positions include D26–K29 and N51–H54. Catalysis depends on H54, which acts as the Proton donor. IMP contacts are provided by T141, R155, N232, and T247. Residue T307 coordinates GTP. Residue T307 to R313 coordinates substrate. IMP is bound at residue R311. Residues R313, K339–D341, and G425–G427 contribute to the GTP site.

This sequence belongs to the adenylosuccinate synthetase family. As to quaternary structure, homodimer. The cofactor is Mg(2+).

It localises to the cytoplasm. The enzyme catalyses IMP + L-aspartate + GTP = N(6)-(1,2-dicarboxyethyl)-AMP + GDP + phosphate + 2 H(+). The protein operates within purine metabolism; AMP biosynthesis via de novo pathway; AMP from IMP: step 1/2. Plays an important role in the salvage pathway for purine nucleotide biosynthesis. Catalyzes the first commited step in the biosynthesis of AMP from IMP. The chain is Adenylosuccinate synthetase from Plasmodium chabaudi chabaudi.